A 119-amino-acid chain; its full sequence is Protein phosphatase EYA4 (119 aa).

The protein belongs to the HAD-like hydrolase superfamily. EYA family. The cofactor is Mg(2+).

The protein localises to the cytoplasm. Its subcellular location is the nucleus. It carries out the reaction O-phospho-L-tyrosyl-[protein] + H2O = L-tyrosyl-[protein] + phosphate. In terms of biological role, tyrosine phosphatase that specifically dephosphorylates 'Tyr-142' of histone H2AX (H2AXY142ph). 'Tyr-142' phosphorylation of histone H2AX plays a central role in DNA repair and acts as a mark that distinguishes between apoptotic and repair responses to genotoxic stress. Promotes efficient DNA repair by dephosphorylating H2AX, promoting the recruitment of DNA repair complexes containing MDC1. Its function as histone phosphatase probably explains its role in transcription regulation during organogenesis. May be involved in development of the eye. The sequence is that of Protein phosphatase EYA4 (EYA4) from Gallus gallus (Chicken).